Reading from the N-terminus, the 134-residue chain is Large ribosomal subunit protein uL16c (134 aa).

The protein belongs to the universal ribosomal protein uL16 family. Part of the 50S ribosomal subunit.

Its subcellular location is the plastid. It is found in the chloroplast. The polypeptide is Large ribosomal subunit protein uL16c (Pinus koraiensis (Korean pine)).